The following is a 393-amino-acid chain: S-adenosylmethionine synthase (393 aa).

H16 is an ATP binding site. D18 contributes to the Mg(2+) binding site. A K(+)-binding site is contributed by E44. E57 and Q100 together coordinate L-methionine. Positions 100-110 (QSNDIAQGVDH) are flexible loop. Residues 167–169 (DAK), 238–239 (RF), D247, 253–254 (RK), A270, and K274 each bind ATP. L-methionine is bound at residue D247. L-methionine is bound at residue K278.

It belongs to the AdoMet synthase family. As to quaternary structure, homotetramer; dimer of dimers. Mg(2+) serves as cofactor. K(+) is required as a cofactor.

It localises to the cytoplasm. The catalysed reaction is L-methionine + ATP + H2O = S-adenosyl-L-methionine + phosphate + diphosphate. It participates in amino-acid biosynthesis; S-adenosyl-L-methionine biosynthesis; S-adenosyl-L-methionine from L-methionine: step 1/1. In terms of biological role, catalyzes the formation of S-adenosylmethionine (AdoMet) from methionine and ATP. The overall synthetic reaction is composed of two sequential steps, AdoMet formation and the subsequent tripolyphosphate hydrolysis which occurs prior to release of AdoMet from the enzyme. This Albidiferax ferrireducens (strain ATCC BAA-621 / DSM 15236 / T118) (Rhodoferax ferrireducens) protein is S-adenosylmethionine synthase.